The chain runs to 446 residues: Exodeoxyribonuclease 7 large subunit (446 aa).

This sequence belongs to the XseA family. Heterooligomer composed of large and small subunits.

It is found in the cytoplasm. The enzyme catalyses Exonucleolytic cleavage in either 5'- to 3'- or 3'- to 5'-direction to yield nucleoside 5'-phosphates.. Functionally, bidirectionally degrades single-stranded DNA into large acid-insoluble oligonucleotides, which are then degraded further into small acid-soluble oligonucleotides. This Streptococcus agalactiae serotype III (strain NEM316) protein is Exodeoxyribonuclease 7 large subunit.